A 21-amino-acid chain; its full sequence is Ocellatin-3 (21 aa).

Isoleucine amide is present on I21.

As to expression, expressed by the skin dorsal glands.

It localises to the secreted. Functionally, has hemolytic activity against human erythrocytes and antibacterial activity against the Gram-negative bacterium E.coli. The protein is Ocellatin-3 of Leptodactylus ocellatus (Argus frog).